The sequence spans 249 residues: MANTGSLVLLRHGESDWNALNLFTGWVDVGLTDKGQAEAVRSGELIAEHDLLPDVLYTSLLRRAITTAHLALDSADRLWIPVRRSWRLNERHYGALQGLDKAETKARYGEEQFMAWRRSYDTPPPPIERGSQFSQDADPRYADIGGGPLTECLADVVARFLPYFTDVIVGDLRVGKTVLIVAHGNSLRALVKHLDQMSDDEIVGLNIPTGIPLRYDLDSAMRPLVRGGTYLDPEAAAAGAAAVAGQGRG.

Substrate-binding positions include 11–18 (RHGESDWN), 24–25 (TG), R63, 90–93 (ERHY), K101, 117–118 (RR), and 184–185 (GN). H12 (tele-phosphohistidine intermediate) is an active-site residue. Catalysis depends on E90, which acts as the Proton donor/acceptor.

It belongs to the phosphoglycerate mutase family. BPG-dependent PGAM subfamily.

The enzyme catalyses (2R)-2-phosphoglycerate = (2R)-3-phosphoglycerate. Its pathway is carbohydrate degradation; glycolysis; pyruvate from D-glyceraldehyde 3-phosphate: step 3/5. Functionally, catalyzes the interconversion of 2-phosphoglycerate and 3-phosphoglycerate. This is 2,3-bisphosphoglycerate-dependent phosphoglycerate mutase from Mycobacterium bovis (strain BCG / Pasteur 1173P2).